A 184-amino-acid chain; its full sequence is Probable chorismate pyruvate-lyase 1 (184 aa).

Substrate contacts are provided by Arg70, Leu108, and Glu166.

The protein belongs to the UbiC family.

The protein localises to the cytoplasm. It carries out the reaction chorismate = 4-hydroxybenzoate + pyruvate. Its pathway is cofactor biosynthesis; ubiquinone biosynthesis. Removes the pyruvyl group from chorismate, with concomitant aromatization of the ring, to provide 4-hydroxybenzoate (4HB) for the ubiquinone pathway. This Burkholderia pseudomallei (strain 1710b) protein is Probable chorismate pyruvate-lyase 1.